Reading from the N-terminus, the 1964-residue chain is Neurogenic locus notch homolog protein 4 (1964 aa).

The N-terminal stretch at 1–20 (MQPQLLLLLLLPLNFPVILT) is a signal peptide. EGF-like domains are found at residues 21–60 (RELL…ETCQ), 61–112 (FPDP…DRCQ), 115–152 (LEEL…EQCQ), and 153–189 (LRDF…HTCE). Topologically, residues 21–1443 (RELLCGGSPE…TRPSANQLPW (1423 aa)) are extracellular. Intrachain disulfides connect C25/C38, C32/C48, C50/C59, C65/C77, C71/C100, C102/C111, C119/C130, C124/C140, C142/C151, C157/C168, C162/C177, C179/C188, C195/C208, C202/C217, C219/C228, C235/C246, C240/C259, C261/C270, C277/C288, C282/C297, C299/C308, C315/C329, C323/C338, C340/C349, C356/C367, C361/C376, C378/C387, C393/C404, C398/C415, C417/C426, C433/C449, C443/C458, C460/C469, C476/C487, C481/C496, C498/C507, C514/C525, C519/C534, C536/C545, C552/C563, C557/C572, C574/C583, C590/C601, C595/C610, C612/C621, C626/C637, C631/C646, C648/C655, C662/C669, C664/C674, C676/C685, C692/C703, C697/C712, C714/C723, C730/C741, C735/C750, C752/C761, C768/C779, C773/C788, C790/C799, C807/C818, C812/C827, C829/C838, C845/C856, C850/C865, C867/C876, C882/C903, C897/C912, C914/C923, C930/C941, C935/C950, C952/C961, C968/C979, C973/C988, C990/C999, C1006/C1019, C1011/C1028, C1030/C1039, C1046/C1057, C1051/C1069, C1071/C1080, C1087/C1098, C1092/C1110, C1112/C1121, C1130/C1142, C1136/C1155, C1157/C1166, C1174/C1187, C1183/C1199, C1210/C1234, C1216/C1229, C1225/C1241, C1247/C1273, C1255/C1268, and C1264/C1280. Residues 191 to 229 (DINECFLEPGPCPQGTSCHNTLGSYQCLCPVGQEGPQCK) enclose the EGF-like 5; calcium-binding domain. The 41-residue stretch at 231-271 (RKGACPPGSCLNGGTCQLVPEGHSTFHLCLCPPGFTGLDCE) folds into the EGF-like 6 domain. The region spanning 273–309 (NPDDCVRHQCQNGATCLDGLDTYTCLCPKTWKGWDCS) is the EGF-like 7; calcium-binding domain. Residues 311–350 (DIDECEARGPPRCRNGGTCQNTAGSFHCVCVSGWGGAGCE) form the EGF-like 8; calcium-binding domain. Positions 352 to 388 (NLDDCAAATCAPGSTCIDRVGSFSCLCPPGRTGLLCH) constitute an EGF-like 9; calcium-binding domain. Residues 389-427 (LEDMCLSQPCHVNAQCSTNPLTGSTLCICQPGYSGSTCH) enclose the EGF-like 10 domain. Positions 429–470 (DLDECQMAQQGPSPCEHGGSCINTPGSFNCLCLPGYTGSRCE) constitute an EGF-like 11; calcium-binding domain. The EGF-like 12; calcium-binding domain occupies 472–508 (DHNECLSQPCHPGSTCLDLLATFHCLCPPGLEGRLCE). The region spanning 510–546 (EVNECTSNPCLNQAACHDLLNGFQCLCLPGFTGARCE) is the EGF-like 13; calcium-binding domain. Positions 548-584 (DMDECSSTPCANGGRCRDQPGAFYCECLPGFEGPHCE) constitute an EGF-like 14; calcium-binding domain. Positions 586-622 (EVDECLSDPCPVGASCLDLPGAFFCLCRPGFTGQLCE) constitute an EGF-like 15; calcium-binding domain. 14 consecutive EGF-like domains span residues 623 to 656 (VPLC…PGCV), 658 to 686 (AEDN…PECE), 688 to 724 (ELGG…LTCS), 726 to 762 (EVTA…RHCQ), 764 to 800 (AVDH…LHCE), 803 to 839 (TNPS…SSCQ), 841 to 877 (LIDL…ALCD), 878 to 924 (FPLS…KLCQ), 926 to 962 (NVNP…QNCS), 964 to 1000 (VLDA…LRCE), 1002 to 1040 (DVDE…QRCE), 1042 to 1081 (EMDL…PTCS), 1083 to 1122 (KALS…PDCL), and 1126 to 1167 (APPG…PRCQ). N711 carries an N-linked (GlcNAc...) asparagine glycan. N960 is a glycosylation site (N-linked (GlcNAc...) asparagine). Residue N1139 is glycosylated (N-linked (GlcNAc...) asparagine). LNR repeat units follow at residues 1166-1209 (CQRP…PWKG), 1210-1241 (CPPH…GYDC), and 1247-1287 (CIPA…GEDS). The disordered stretch occupies residues 1345–1369 (EELSGARDSSSWERQAPPTQPLGKE). The helical transmembrane segment at 1444 to 1464 (PILCSPVVGVLLLALGALLVL) threads the bilayer. Topologically, residues 1465-1964 (QLIRRRRREH…PLNSVVRNLN (500 aa)) are cytoplasmic. Residues 1516–1535 (VDEDGVAMCSGPEEGEAEET) form a disordered region. ANK repeat units follow at residues 1628 to 1657 (TGET…NPNQ), 1661 to 1691 (AGRT…TVDA), 1695 to 1724 (DGTT…DVGA), 1728 to 1757 (RGKT…DKDA), and 1761 to 1790 (REQT…ARGL). The tract at residues 1879–1907 (RSGSCGGPTTRGRRFSAGSRGRRGARASQ) is disordered.

It belongs to the NOTCH family. In terms of assembly, heterodimer of a C-terminal fragment N(TM) and a N-terminal fragment N(EC) which are probably linked by disulfide bonds. Interacts with MAML1, MAML2 and MAML3 which act as transcriptional coactivators for NOTCH4. In terms of processing, synthesized in the endoplasmic reticulum as an inactive form which is proteolytically cleaved by a furin-like convertase in the trans-Golgi network before it reaches the plasma membrane to yield an active, ligand-accessible form. Cleavage results in a C-terminal fragment N(TM) and a N-terminal fragment N(EC). Following ligand binding, it is cleaved by TNF-alpha converting enzyme (TACE) to yield a membrane-associated intermediate fragment called notch extracellular truncation (NEXT). This fragment is then cleaved by presenilin dependent gamma-secretase to release a notch-derived peptide containing the intracellular domain (NICD) from the membrane. Phosphorylated. Highly expressed in lung, moderately in heart kidney, and at lower levels in the ovary and skeletal muscle. A very low expression is seen in the brain, intestine, liver and testis.

The protein resides in the cell membrane. The protein localises to the nucleus. In terms of biological role, functions as a receptor for membrane-bound ligands Jagged1, Jagged2 and Delta1 to regulate cell-fate determination. Upon ligand activation through the released notch intracellular domain (NICD) it forms a transcriptional activator complex with RBPJ/RBPSUH and activates genes of the enhancer of split locus. Affects the implementation of differentiation, proliferation and apoptotic programs. May regulate branching morphogenesis in the developing vascular system. The protein is Neurogenic locus notch homolog protein 4 of Mus musculus (Mouse).